Here is a 208-residue protein sequence, read N- to C-terminus: MLKKPIIIGVTGGSGGGKTSVSRAILDSFPNARIAMIQHDSYYKDQSHMSFEERVKTNYDHPLAFDTDFMIQQLKELLAGRPVDIPIYDYKKHTRSNTTFRQDPQDVIIVEGILVLEDERLRDLMDIKLFVDTDDDIRIIRRIKRDMMERGRSLESIIDQYTSVVKPMYHQFIEPSKRYADIVIPEGVSNVVAIDVINSKIASILGEV.

ATP is bound at residue 12-19 (GGSGGGKT).

Belongs to the uridine kinase family.

Its subcellular location is the cytoplasm. It catalyses the reaction uridine + ATP = UMP + ADP + H(+). The catalysed reaction is cytidine + ATP = CMP + ADP + H(+). The protein operates within pyrimidine metabolism; CTP biosynthesis via salvage pathway; CTP from cytidine: step 1/3. Its pathway is pyrimidine metabolism; UMP biosynthesis via salvage pathway; UMP from uridine: step 1/1. In Streptococcus pyogenes serotype M3 (strain ATCC BAA-595 / MGAS315), this protein is Uridine kinase.